Consider the following 344-residue polypeptide: Serine proteinase inhibitor 2 (344 aa).

It belongs to the serpin family. Poxviruses subfamily.

Its subcellular location is the host cytoplasm. Viral serpin that inhibits both cysteine and serine proteinases involved in the regulation of host inflammatory and apoptosis processes. Major anti-apoptotic protein which inhibits both intrinsic and extrinsic pathways and strongly cleaves host CASP1 and CASP8 but is a rather poor inhibitor of host CASP3. Prevents the proteolytic activity of host interleukin-1-beta converting enzyme (ICE) and ICE-like enzymes. Can also block apoptosis through host tumor necrosis factor (TNF) receptor. The inhibition of host ICE is an example of a 'cross-class' interaction, in which a serpin inhibits a non-serine proteinase. Also inhibits granzyme B. The chain is Serine proteinase inhibitor 2 (OPG199) from Cynomys gunnisoni (Gunnison's prairie dog).